Here is a 102-residue protein sequence, read N- to C-terminus: Small ribosomal subunit protein uS10 (102 aa).

This sequence belongs to the universal ribosomal protein uS10 family. As to quaternary structure, part of the 30S ribosomal subunit.

Functionally, involved in the binding of tRNA to the ribosomes. This chain is Small ribosomal subunit protein uS10, found in Methanothrix thermoacetophila (strain DSM 6194 / JCM 14653 / NBRC 101360 / PT) (Methanosaeta thermophila).